We begin with the raw amino-acid sequence, 357 residues long: 3-isopropylmalate dehydrogenase (357 aa).

76–89 provides a ligand contact to NAD(+); it reads GPKWDALDSNIRPE. Residues R96, R106, R134, and D224 each contribute to the substrate site. Residues D224, D248, and D252 each coordinate Mg(2+). Position 282–294 (282–294) interacts with NAD(+); that stretch reads GSAPDIAGQGVAN.

It belongs to the isocitrate and isopropylmalate dehydrogenases family. LeuB type 1 subfamily. As to quaternary structure, homodimer. It depends on Mg(2+) as a cofactor. Requires Mn(2+) as cofactor.

It is found in the cytoplasm. It carries out the reaction (2R,3S)-3-isopropylmalate + NAD(+) = 4-methyl-2-oxopentanoate + CO2 + NADH. It participates in amino-acid biosynthesis; L-leucine biosynthesis; L-leucine from 3-methyl-2-oxobutanoate: step 3/4. Catalyzes the oxidation of 3-carboxy-2-hydroxy-4-methylpentanoate (3-isopropylmalate) to 3-carboxy-4-methyl-2-oxopentanoate. The product decarboxylates to 4-methyl-2 oxopentanoate. This Saccharophagus degradans (strain 2-40 / ATCC 43961 / DSM 17024) protein is 3-isopropylmalate dehydrogenase.